The chain runs to 242 residues: Cysteine desulfuration protein SufE (242 aa).

Residue Cys-148 is the Cysteine persulfide intermediate of the active site.

The protein belongs to the SufE family. Monomer. Interacts with SufS; interaction enhances cysteine desulfurase activity of SufS.

It is found in the plastid. The protein localises to the apicoplast. It functions in the pathway cofactor biosynthesis; iron-sulfur cluster biosynthesis. In terms of biological role, participates in sulfur mobilization (SUF) pathway for iron-sulfur (Fe-S) cluster biogenesis. Enhances cysteine desulfurase activity of SufS. Probably functions as a sulfur acceptor for SufS. This Plasmodium vivax protein is Cysteine desulfuration protein SufE.